We begin with the raw amino-acid sequence, 142 residues long: Large ribosomal subunit protein uL13 (142 aa).

It belongs to the universal ribosomal protein uL13 family. As to quaternary structure, part of the 50S ribosomal subunit.

This protein is one of the early assembly proteins of the 50S ribosomal subunit, although it is not seen to bind rRNA by itself. It is important during the early stages of 50S assembly. The chain is Large ribosomal subunit protein uL13 from Acidovorax sp. (strain JS42).